The following is a 469-amino-acid chain: uncharacterized protein (469 aa).

Disordered stretches follow at residues 248–314 (RDDN…EPES) and 327–418 (QMDQ…PRPT). 2 stretches are compositionally biased toward polar residues: residues 292–305 (ESSN…NAAS) and 350–365 (TARQ…PNTV). A compositionally biased stretch (low complexity) spans 366–377 (TATSASTPASTS).

This is an uncharacterized protein from Cryphonectria parasitica (Chestnut blight fungus).